Consider the following 454-residue polypeptide: Cell division cycle-associated 7-like protein (454 aa).

Positions Ile-9–Val-33 match the Integrase domain-binding motif 1 (IBM1) motif. Ser-21 carries the post-translational modification Phosphoserine. Positions Phe-65–Asp-91 match the Integrase domain-binding motif 2 (IBM2) motif. Thr-77 carries the phosphothreonine modification. Ser-79 is modified (phosphoserine). Residues Thr-81 and Thr-88 each carry the phosphothreonine modification. Disordered stretches follow at residues Val-103–Ser-169 and Gln-188–Ala-213. Residues Ser-105, Ser-108, Ser-117, Ser-138, Ser-139, Ser-162, Ser-195, and Ser-197 each carry the phosphoserine modification. Positions Ser-117–Asp-126 are enriched in acidic residues. Residues Ala-213–Leu-235 are MYC-binding. Residues Lys-222 and Lys-225 each participate in a glycyl lysine isopeptide (Lys-Gly) (interchain with G-Cter in SUMO2) cross-link. A Phosphoserine modification is found at Ser-261.

Interacts with MYC. Interacts (via IBM motifs) with PSIP1 (via IBD domain); phosphorylation increases its affinity for PSIP1. Phosphorylation increases its interaction with PSIP1. As to expression, ubiquitous. Overexpressed in medulloblastoma.

It localises to the cytoplasm. The protein resides in the nucleus. Its function is as follows. Plays a role in transcriptional regulation as a repressor that inhibits monoamine oxidase A (MAOA) activity and gene expression by binding to the promoter. Plays an important oncogenic role in mediating the full transforming effect of MYC in medulloblastoma cells. Involved in apoptotic signaling pathways; May act downstream of P38-kinase and BCL-2, but upstream of CASP3/caspase-3 as well as CCND1/cyclin D1 and E2F1. This chain is Cell division cycle-associated 7-like protein (CDCA7L), found in Homo sapiens (Human).